Here is a 161-residue protein sequence, read N- to C-terminus: MIKYTIDELFQLKPSVTLEVNFDAVEFRAIIEKVKQLQHLKEEEFNSHHVGHFGRRRSSHHHGRPKIKHNKPKVTTDSDGWCTFEAKKKGSGEDDEEETETTPTSTVPVATIAQETLKVKPNNKNISSNRPADTRDIVADKPILGFNAFAALESEDEDDEA.

The segment covering 52-72 has biased composition (basic residues); it reads HFGRRRSSHHHGRPKIKHNKP. The interval 52-108 is disordered; the sequence is HFGRRRSSHHHGRPKIKHNKPKVTTDSDGWCTFEAKKKGSGEDDEEETETTPTSTVP. 2 positions are modified to phosphoserine: Ser-78 and Ser-91. Thr-99, Thr-101, and Thr-102 each carry phosphothreonine. Ser-154 carries the post-translational modification Phosphoserine.

It belongs to the CAF20 family. As to quaternary structure, interacts with TIF45. Phosphorylated by casein kinase II complex (CK2).

The protein resides in the cytoplasm. In terms of biological role, acts as an inhibitor of cap-dependent translation. Competes with eIF4G1/TIF4631 and EAP1 for binding to eIF4E/TIF45 and interferes with the formation of the eIF4F complex, inhibiting translation and stabilizing mRNA. Binding affinity for eIF4E/TIF45 is 10-fold less than that of eIF4G1/TIF4631. Required for induction of pseudohyphal growth in response to nitrogen limitation, probably by regulating STE12 translation. The polypeptide is Cap-associated protein CAF20 (CAF20) (Saccharomyces cerevisiae (strain YJM789) (Baker's yeast)).